The sequence spans 1038 residues: Rap guanine nucleotide exchange factor 1 (1038 aa).

10–140 (RLSPLHTFSD…DILTDETPSD (131 aa)) contributes to the a nucleoside 3',5'-cyclic phosphate binding site. Residues 234–316 (TDNHQVIRDI…KTNSYYRWVQ (83 aa)) form the DEP domain. An a nucleoside 3',5'-cyclic phosphate-binding site is contributed by 375–492 (ALSHLSTMVK…VRLKDYGEDV (118 aa)). One can recognise an N-terminal Ras-GEF domain in the interval 516 to 654 (CGYSVMAGKA…DILTRIGSIR (139 aa)). Residues 795 to 1028 (DSQELAHQLF…MQLSYEIEPK (234 aa)) enclose the Ras-GEF domain.

Interacts (via C-terminus) with drn-1. In terms of tissue distribution, expressed specifically in neurons including the nerve ring, ventral and dorsal nerve cord motor neurons and tail ganglia.

In terms of biological role, guanine nucleotide-releasing protein. Together with GTPase drn-1, may regulate acetylcholine release at the neuromuscular junctions probably downstream of G-protein gsa-1 and adenylate cyclase acy-1. The sequence is that of Rap guanine nucleotide exchange factor 1 (epac-1) from Caenorhabditis elegans.